The chain runs to 136 residues: Probable disulfide formation protein (136 aa).

Residues 7 to 26 traverse the membrane as a helical segment; sequence NNALYFAWLICSTGTVMSIY. Cysteine 36 and cysteine 39 are disulfide-bonded. Transmembrane regions (helical) follow at residues 41 to 60 and 67 to 84; these read YQRICLFPLSIILGIATYRE and YALPLSITGMVIAVYQIC. A disulfide bridge connects residues cysteine 96 and cysteine 101. A helical membrane pass occupies residues 109–133; the sequence is GFITVPMASALAFCAISCLLILSGS.

It belongs to the DsbB family. BdbC subfamily.

The protein resides in the cell inner membrane. Required for disulfide bond formation in some proteins. This chain is Probable disulfide formation protein, found in Chlamydia caviae (strain ATCC VR-813 / DSM 19441 / 03DC25 / GPIC) (Chlamydophila caviae).